A 183-amino-acid chain; its full sequence is MSVVVGGVEYSLNNWARYEIKRRAAELESVNYYPHCEYIMPEDIVVSILGSKPNCPFLEALKRFHDFLKKRRIIFKGEYLVIPWMGAQDVADMIHHVENRINLDHLEDLAHMLKLITYHKSFDTCINQAFEHLYAFKFPDANIETHELKHIRQLEKKMYGYILRLEKLQTVLTFYIEFLLKQV.

Belongs to the asfivirus S183L family.

This is an uncharacterized protein from Ornithodoros (relapsing fever ticks).